Here is a 254-residue protein sequence, read N- to C-terminus: Gamma-glutamyl-gamma-aminobutyrate hydrolase (254 aa).

Residues 16 to 250 (RNRLKGHATQ…ITACQHHIAE (235 aa)) enclose the Glutamine amidotransferase type-1 domain. The Nucleophile role is filled by cysteine 114. Residues histidine 222 and glutamate 224 contribute to the active site.

Belongs to the peptidase C26 family.

The enzyme catalyses 4-(gamma-L-glutamylamino)butanoate + H2O = 4-aminobutanoate + L-glutamate. It functions in the pathway amine and polyamine degradation; putrescine degradation; 4-aminobutanoate from putrescine: step 4/4. Involved in the breakdown of putrescine via hydrolysis of the gamma-glutamyl linkage of gamma-glutamyl-gamma-aminobutyrate. The polypeptide is Gamma-glutamyl-gamma-aminobutyrate hydrolase (puuD) (Escherichia coli O157:H7).